Reading from the N-terminus, the 572-residue chain is FAD-linked oxidoreductase patO (572 aa).

An N-terminal signal peptide occupies residues 1-23; it reads MRLSIYSSILLLRAMCLVRPTFG. Residues Asn-48, Asn-71, Asn-126, Asn-180, Asn-309, Asn-354, Asn-381, Asn-422, Asn-446, and Asn-481 are each glycosylated (N-linked (GlcNAc...) asparagine). The FAD-binding PCMH-type domain occupies 115 to 295; it reads CAPGDMVVYS…YSMTVKAFPD (181 aa).

It belongs to the oxygen-dependent FAD-linked oxidoreductase family. The cofactor is FAD.

The protein localises to the vacuole lumen. It participates in mycotoxin biosynthesis; patulin biosynthesis. In terms of biological role, FAD-linked oxidoreductase; part of the gene cluster that mediates the biosynthesis of patulin, an acetate-derived tetraketide mycotoxin produced by several fungal species that shows antimicrobial properties against several bacteria. PatO acts with patJ in the vacuole to convert gentisyl alcohol to isoepoxydon. The pathway begins with the synthesis of 6-methylsalicylic acid by the polyketide synthase (PKS) patK via condensation of acetate and malonate units. The 6-methylsalicylic acid decarboxylase patG then catalyzes the decarboxylation of 6-methylsalicylic acid to yield m-cresol (also known as 3-methylphenol). These first reactions occur in the cytosol. The intermediate m-cresol is then transported into the endoplasmic reticulum where the cytochrome P450 monooxygenase patH converts it to m-hydroxybenzyl alcohol, which is further converted to gentisyl alcohol by the cytochrome P450 monooxygenase patI. The oxidoreductases patJ and patO further convert gentisyl alcohol to isoepoxydon in the vacuole. PatN catalyzes then the transformation of isoepoxydon into phyllostine. The cluster protein patF is responsible for the conversion from phyllostine to neopatulin whereas the alcohol dehydrogenase patD converts neopatulin to E-ascladiol. The steps between isoepoxydon and E-ascladiol occur in the cytosol, and E-ascladiol is probably secreted to the extracellular space by one of the cluster-specific transporters patC or patM. Finally, the secreted patulin synthase patE catalyzes the conversion of E-ascladiol to patulin. The protein is FAD-linked oxidoreductase patO of Aspergillus clavatus (strain ATCC 1007 / CBS 513.65 / DSM 816 / NCTC 3887 / NRRL 1 / QM 1276 / 107).